The sequence spans 877 residues: MLGSLLLLAPLAGAAVIGSRADTQQCPGYKASNVQENDRSLTADLTLAGKPCNTYGTDLHNLKLLVEYQTDERLHVKIYDAEERVYQVPEKVTPRVDSGDGSSKDSALKFEYEEEPFSFTVKRDDEVLFDSSAENLIFQSQYLKLRTWLPENPYLYGLGEHTDPLRLSTTNYTRTFWNRDAYGTSANSNLYGTHPVYYDHRGESGTHGVFLLNSNGMDVFIDKTADGKQYLEYNALGGIFDFYFFTGSNPKEASIEYSKIVGLPAMQSYWTFGLHQCRYGYRDVYQVAEVVYNYTKAGIPLETMWTDIDYMDRRRVFSLDPDRFPLEKMRELVGYLHDHDQHYIVMVDPAVSVSDNGAFNRGLEQDVFLKTQNGSLYKGAVWPGVTAYPDWFHPDIQDYWNSEFSTFFNAETGVDIDGLWIDMNEASNFCPDPCTDPERYSSENNLPPAPPPVRSSSPRPLPGFPADFQPSSASRSQKRIVKAKVGLEGRDLLNPPYKIRNEAGSLSNKTINTGIVHAGEGYAEYDTHNLYGTMMSSSSREAMQYRRPEVRPLVITRSTYAGAGRDVGHWLGDNFSKWEHYRISIAEGLAFASMFQVPMVGADVCGFAGNTTEELCARWASLGAFFTFYRNHNEIGNIGQEFYVWPTVAESARKAIDIRYRLLDYIYTSFYKQSQTGEPFLQPVFYLYPEDENTFSIDLQFFYGDAILVSPVPDKGLTSVDAYFPDDIFYDWYTGTPVRGHGANITLSNIDITHIPLHIRGGSIIPIRSSSAMTTTELREKSFQLIIAPGLDGTASGSLYLDDGDSLEQKATLEVEFEYRKGVLHIDGKFELHASLVESVTLLGQGKGGSRARREDGTKKTIQTNLELSKPTEIKLE.

The signal sequence occupies residues 1–14; it reads MLGSLLLLAPLAGA. Residues Asn171, Asn293, and Asn373 are each glycosylated (N-linked (GlcNAc...) asparagine). Asp422 acts as the Nucleophile in catalysis. The active site involves Glu425. The interval 432–476 is disordered; sequence DPCTDPERYSSENNLPPAPPPVRSSSPRPLPGFPADFQPSSASRS. Positions 447–463 are enriched in pro residues; that stretch reads PPAPPPVRSSSPRPLPG. An N-linked (GlcNAc...) asparagine glycan is attached at Asn508. Asp573 acts as the Proton donor in catalysis. Residues Asn574, Asn610, and Asn744 are each glycosylated (N-linked (GlcNAc...) asparagine).

Belongs to the glycosyl hydrolase 31 family.

It localises to the secreted. The catalysed reaction is Hydrolysis of terminal, non-reducing (1-&gt;4)-linked alpha-D-glucose residues with release of alpha-D-glucose.. It carries out the reaction Hydrolysis of terminal, non-reducing beta-D-glucosyl residues with release of beta-D-glucose.. Glucosidase involved in the degradation of cellulosic biomass. Has both alpha- and beta-glucosidase activity. This Aspergillus oryzae (strain ATCC 42149 / RIB 40) (Yellow koji mold) protein is Probable alpha/beta-glucosidase agdC (agdC).